The primary structure comprises 312 residues: 4-hydroxy-3-methylbut-2-enyl diphosphate reductase (312 aa).

Cysteine 15 serves as a coordination point for [4Fe-4S] cluster. Positions 44 and 77 each coordinate (2E)-4-hydroxy-3-methylbut-2-enyl diphosphate. Positions 44 and 77 each coordinate dimethylallyl diphosphate. Isopentenyl diphosphate is bound by residues histidine 44 and histidine 77. [4Fe-4S] cluster is bound at residue cysteine 99. Histidine 127 lines the (2E)-4-hydroxy-3-methylbut-2-enyl diphosphate pocket. Dimethylallyl diphosphate is bound at residue histidine 127. Histidine 127 serves as a coordination point for isopentenyl diphosphate. Glutamate 129 acts as the Proton donor in catalysis. Residue threonine 167 coordinates (2E)-4-hydroxy-3-methylbut-2-enyl diphosphate. Cysteine 197 is a binding site for [4Fe-4S] cluster. Positions 225, 226, 227, and 269 each coordinate (2E)-4-hydroxy-3-methylbut-2-enyl diphosphate. The dimethylallyl diphosphate site is built by serine 225, serine 226, asparagine 227, and serine 269. Isopentenyl diphosphate-binding residues include serine 225, serine 226, asparagine 227, and serine 269.

The protein belongs to the IspH family. [4Fe-4S] cluster is required as a cofactor.

It carries out the reaction isopentenyl diphosphate + 2 oxidized [2Fe-2S]-[ferredoxin] + H2O = (2E)-4-hydroxy-3-methylbut-2-enyl diphosphate + 2 reduced [2Fe-2S]-[ferredoxin] + 2 H(+). The catalysed reaction is dimethylallyl diphosphate + 2 oxidized [2Fe-2S]-[ferredoxin] + H2O = (2E)-4-hydroxy-3-methylbut-2-enyl diphosphate + 2 reduced [2Fe-2S]-[ferredoxin] + 2 H(+). It participates in isoprenoid biosynthesis; dimethylallyl diphosphate biosynthesis; dimethylallyl diphosphate from (2E)-4-hydroxy-3-methylbutenyl diphosphate: step 1/1. It functions in the pathway isoprenoid biosynthesis; isopentenyl diphosphate biosynthesis via DXP pathway; isopentenyl diphosphate from 1-deoxy-D-xylulose 5-phosphate: step 6/6. Functionally, catalyzes the conversion of 1-hydroxy-2-methyl-2-(E)-butenyl 4-diphosphate (HMBPP) into a mixture of isopentenyl diphosphate (IPP) and dimethylallyl diphosphate (DMAPP). Acts in the terminal step of the DOXP/MEP pathway for isoprenoid precursor biosynthesis. The chain is 4-hydroxy-3-methylbut-2-enyl diphosphate reductase from Azoarcus sp. (strain BH72).